Consider the following 667-residue polypeptide: Transketolase 2 (667 aa).

Residue histidine 25 participates in substrate binding. Residues histidine 65 and 113–115 (GPL) contribute to the thiamine diphosphate site. Aspartate 154 is a Mg(2+) binding site. 2 residues coordinate thiamine diphosphate: glycine 155 and asparagine 184. Residues asparagine 184 and isoleucine 186 each coordinate Mg(2+). Substrate is bound at residue histidine 260. Histidine 260 provides a ligand contact to thiamine diphosphate. Residue lysine 342 is modified to N6-acetyllysine. Substrate is bound by residues arginine 357 and serine 384. Residue glutamate 410 is the Proton donor of the active site. Phenylalanine 436 lines the thiamine diphosphate pocket. Residues histidine 460, aspartate 468, and arginine 519 each contribute to the substrate site.

This sequence belongs to the transketolase family. As to quaternary structure, homodimer. Requires Mg(2+) as cofactor. Ca(2+) is required as a cofactor. The cofactor is Mn(2+). It depends on Co(2+) as a cofactor. Thiamine diphosphate serves as cofactor.

The enzyme catalyses D-sedoheptulose 7-phosphate + D-glyceraldehyde 3-phosphate = aldehydo-D-ribose 5-phosphate + D-xylulose 5-phosphate. Functionally, catalyzes the reversible transfer of a two-carbon ketol group from sedoheptulose-7-phosphate to glyceraldehyde-3-phosphate, producing xylulose-5-phosphate and ribose-5-phosphate. Catalyzes the transfer of a two-carbon ketol group from a ketose donor to an aldose acceptor, via a covalent intermediate with the cofactor thiamine pyrophosphate. In Escherichia coli (strain K12), this protein is Transketolase 2.